The sequence spans 612 residues: Phosphomethylpyrimidine synthase (612 aa).

Disordered regions lie at residues 1–33 (MTIKDARTPASTQNTAQADTAENTDTAEDTEAG) and 105–146 (AGRP…RDGN). Residues 12 to 24 (TQNTAQADTAENT) show a composition bias toward low complexity. Over residues 105-117 (AGRPVRPEDDGIK) the composition is skewed to basic and acidic residues. Substrate-binding positions include Asn-213, Met-242, Tyr-271, His-307, 327-329 (SRG), 368-371 (DGLR), and Glu-407. A Zn(2+)-binding site is contributed by His-411. Residue Tyr-434 coordinates substrate. Residue His-475 participates in Zn(2+) binding. 3 residues coordinate [4Fe-4S] cluster: Cys-555, Cys-558, and Cys-563.

The protein belongs to the ThiC family. The cofactor is [4Fe-4S] cluster.

It carries out the reaction 5-amino-1-(5-phospho-beta-D-ribosyl)imidazole + S-adenosyl-L-methionine = 4-amino-2-methyl-5-(phosphooxymethyl)pyrimidine + CO + 5'-deoxyadenosine + formate + L-methionine + 3 H(+). The protein operates within cofactor biosynthesis; thiamine diphosphate biosynthesis. In terms of biological role, catalyzes the synthesis of the hydroxymethylpyrimidine phosphate (HMP-P) moiety of thiamine from aminoimidazole ribotide (AIR) in a radical S-adenosyl-L-methionine (SAM)-dependent reaction. The protein is Phosphomethylpyrimidine synthase of Streptomyces coelicolor (strain ATCC BAA-471 / A3(2) / M145).